We begin with the raw amino-acid sequence, 89 residues long: uncharacterized protein (89 aa).

Residues 39 to 61 traverse the membrane as a helical segment; the sequence is FVCFWSIWFWTGDISFSLLSMLV.

The protein resides in the membrane. This is an uncharacterized protein from Saccharomyces cerevisiae (strain ATCC 204508 / S288c) (Baker's yeast).